Reading from the N-terminus, the 510-residue chain is 2,3-bisphosphoglycerate-independent phosphoglycerate mutase (510 aa).

Mn(2+) contacts are provided by Asp13 and Ser63. Ser63 functions as the Phosphoserine intermediate in the catalytic mechanism. Substrate contacts are provided by residues His124, 154-155 (RD), Arg186, Arg192, 262-265 (RADR), and Lys334. The Mn(2+) site is built by Asp401, His405, Asp442, His443, and His461.

It belongs to the BPG-independent phosphoglycerate mutase family. Monomer. Requires Mn(2+) as cofactor.

The enzyme catalyses (2R)-2-phosphoglycerate = (2R)-3-phosphoglycerate. It functions in the pathway carbohydrate degradation; glycolysis; pyruvate from D-glyceraldehyde 3-phosphate: step 3/5. Catalyzes the interconversion of 2-phosphoglycerate and 3-phosphoglycerate. The chain is 2,3-bisphosphoglycerate-independent phosphoglycerate mutase from Vibrio atlanticus (strain LGP32) (Vibrio splendidus (strain Mel32)).